A 651-amino-acid chain; its full sequence is Beta-glucuronidase (651 aa).

Positions Met1–Ala22 are cleaved as a signal peptide. 2 N-linked (GlcNAc...) asparagine glycosylation sites follow: Asn172 and Asn419. Glu450 functions as the Proton donor in the catalytic mechanism. A glycan (N-linked (GlcNAc...) asparagine) is linked at Asn630.

It belongs to the glycosyl hydrolase 2 family. Homotetramer.

It localises to the lysosome. It carries out the reaction a beta-D-glucuronoside + H2O = D-glucuronate + an alcohol. Its activity is regulated as follows. Inhibited by L-aspartic acid. Plays an important role in the degradation of dermatan and keratan sulfates. The chain is Beta-glucuronidase (GUSB) from Canis lupus familiaris (Dog).